Consider the following 219-residue polypeptide: Chloramphenicol acetyltransferase (219 aa).

The active-site Proton acceptor is the H190.

Belongs to the chloramphenicol acetyltransferase family. As to quaternary structure, homotrimer.

It catalyses the reaction chloramphenicol + acetyl-CoA = chloramphenicol 3-acetate + CoA. This enzyme is an effector of chloramphenicol resistance in bacteria. In Clostridium perfringens, this protein is Chloramphenicol acetyltransferase (catQ).